The following is a 357-amino-acid chain: MSYDEMLSAAKKAVSLAARLSNEVRKSLLVTDVWNKSDDSPVTVADYGSQAVVSLVLERELQNEPVSLVAEEDSGELRKIAAETVLARITELVKDTLASDESYAIASPLTSDDVLNAIDRGKSEGGPKGRHWILDPIGGTRGFIRGEQYAIGLALLVEGKVVLGVMACPKLPLASTAGNALKSLPEKVGCLFYGSVGNGTYVQSLSVDSLPAKVEVSSIDDPAKASFFESYHTPVPIHNTIATKLGIKESPIKINSQTKYAALSRGDGEVYLRFTRKARPESIWNHAAGSIIVSEAGGKVTDAAGNPLDFSKGKYLDYKRGIVVTTQKLLPRLLTAVRESIKEEEEEEEKAASLKLH.

The Proton acceptor role is filled by Asp-46. Mg(2+) is bound by residues Glu-71, Asp-135, and Ile-137. The Proton acceptor role is filled by Thr-140. Positions 140, 256, 259, and 273 each coordinate adenosine 3',5'-bisphosphate. AMP contacts are provided by Ser-256, Lys-259, and Arg-273.

Belongs to the inositol monophosphatase superfamily. The cofactor is Mg(2+).

It catalyses the reaction 3'-phosphoadenylyl sulfate + H2O = adenosine 5'-phosphosulfate + phosphate. It carries out the reaction adenosine 3',5'-bisphosphate + H2O = AMP + phosphate. The catalysed reaction is adenosine 2',5'-bisphosphate + H2O = AMP + phosphate. The enzyme catalyses 1D-myo-inositol 1,4-bisphosphate + H2O = 1D-myo-inositol 4-phosphate + phosphate. It catalyses the reaction 1D-myo-inositol 1,3,4-trisphosphate + H2O = 1D-myo-inositol 3,4-bisphosphate + phosphate. Its pathway is signal transduction; phosphatidylinositol signaling pathway. Phosphatase that converts adenosine 3'-phosphate 5'-phosphosulfate (PAPS) to adenosine 5'-phosphosulfate (APS) and 3'(2')-phosphoadenosine 5'-phosphate (PAP) to AMP. Is also able to hydrolyze inositol 1,4-bisphosphate and inositol 1,3,4-trisphosphate. The sequence is that of Probable 3'(2'),5'-bisphosphate nucleotidase 3 (SAL3) from Arabidopsis thaliana (Mouse-ear cress).